A 343-amino-acid polypeptide reads, in one-letter code: Major outer membrane protein (343 aa).

The N-terminal stretch at 1-20 (MKKTIVALAVAAVAATSANA) is a signal peptide.

As to quaternary structure, disulfide bond interactions within and between MOMP molecules and other components form high molecular-weight oligomers.

The protein resides in the cell outer membrane. Functionally, structural rigidity of the outer membrane of elementary bodies and porin forming, permitting diffusion of solutes through the intracellular reticulate body membrane. This chain is Major outer membrane protein (ompH), found in Pasteurella multocida.